Reading from the N-terminus, the 465-residue chain is VGFKAGVKDYKLTYYTPEYKTKDTDILAAFRVTPQPGVPPEEAGAAVAAESSTGTWTTVWTDGLTSLDRYKGRCYHIETVTGEENQFIVYVAYPLDLFEEGSVTNMFTSIVGDVFGFKALRALRLEDLRIPPAYSKTFQGPPHGIQVERDKLNKYGRPLLGCTIKPKLGLSAKNYGRAVYECLRGGLDFTKDDENVNSQPFMRWRDRFLFCAEALYKAQAETGEIKGHYLNATAGTCEEMIKRAVFARELGVPIVMHDYLTGGFTANTTLSYYCRDNGLLLHIHRAMHAVIDRQKNHGIHFRVLAKALRMSGGDHIHSGIVVGKLEGERDITLGFVDLLRDDLVEEDRSRGIYFTQDWVSLPGVLPVASGGIHVWHMPALTEIFGDDSVLQFGGGTLGHPWGNAPGAVANRVALEACVQARNEGRDLAREGNEIIREASKWSPELAAACEVWKEIKFEFEAMDTL.

Residue Lys-4 is modified to N6,N6,N6-trimethyllysine. Thr-163 provides a ligand contact to substrate. Lys-165 serves as the catalytic Proton acceptor. A substrate-binding site is contributed by Lys-167. Mg(2+) contacts are provided by Lys-191, Asp-193, and Glu-194. Lys-191 bears the N6-carboxylysine mark. The Proton acceptor role is filled by His-284. Positions 285, 317, and 369 each coordinate substrate.

Belongs to the RuBisCO large chain family. Type I subfamily. Heterohexadecamer of 8 large chains and 8 small chains; disulfide-linked. The disulfide link is formed within the large subunit homodimers. Mg(2+) serves as cofactor. Post-translationally, the disulfide bond which can form in the large chain dimeric partners within the hexadecamer appears to be associated with oxidative stress and protein turnover.

It localises to the plastid. The protein localises to the chloroplast. It catalyses the reaction 2 (2R)-3-phosphoglycerate + 2 H(+) = D-ribulose 1,5-bisphosphate + CO2 + H2O. The enzyme catalyses D-ribulose 1,5-bisphosphate + O2 = 2-phosphoglycolate + (2R)-3-phosphoglycerate + 2 H(+). In terms of biological role, ruBisCO catalyzes two reactions: the carboxylation of D-ribulose 1,5-bisphosphate, the primary event in carbon dioxide fixation, as well as the oxidative fragmentation of the pentose substrate in the photorespiration process. Both reactions occur simultaneously and in competition at the same active site. The polypeptide is Ribulose bisphosphate carboxylase large chain (Trochodendron aralioides (Wheel tree)).